Reading from the N-terminus, the 416-residue chain is D-amino acid dehydrogenase (416 aa).

3-17 serves as a coordination point for FAD; it reads ITILGSGVIGVTTAY.

The protein belongs to the DadA oxidoreductase family. It depends on FAD as a cofactor.

It carries out the reaction a D-alpha-amino acid + A + H2O = a 2-oxocarboxylate + AH2 + NH4(+). The protein operates within amino-acid degradation; D-alanine degradation; NH(3) and pyruvate from D-alanine: step 1/1. In terms of biological role, oxidative deamination of D-amino acids. This is D-amino acid dehydrogenase from Brucella canis (strain ATCC 23365 / NCTC 10854 / RM-666).